The sequence spans 181 residues: MFAMVNGLRSYSQQAIQAARYIGQGFVVTLDHMNRLPMTIQYPYEKLIPSERFRGRIHFEFDKCIACEVCVRVCPINLPVVDWELKESVRKKQLKNYSIDFAVCIFCGNCVEYCPTNCLSMTEEYELSTYDRHELNYDQIALGRLPVSVVQDPTTQTVSGLNYLSKGVMEGHPDSRSVTNF.

4Fe-4S ferredoxin-type domains are found at residues 55 to 84 (GRIHFEFDKCIACEVCVRVCPINLPVVDWE) and 95 to 124 (KNYSIDFAVCIFCGNCVEYCPTNCLSMTEE). Cysteine 64, cysteine 67, cysteine 70, cysteine 74, cysteine 104, cysteine 107, cysteine 110, and cysteine 114 together coordinate [4Fe-4S] cluster.

This sequence belongs to the complex I 23 kDa subunit family. As to quaternary structure, NDH is composed of at least 16 different subunits, 5 of which are encoded in the nucleus. [4Fe-4S] cluster serves as cofactor.

The protein localises to the plastid. It is found in the chloroplast thylakoid membrane. The catalysed reaction is a plastoquinone + NADH + (n+1) H(+)(in) = a plastoquinol + NAD(+) + n H(+)(out). It catalyses the reaction a plastoquinone + NADPH + (n+1) H(+)(in) = a plastoquinol + NADP(+) + n H(+)(out). Functionally, NDH shuttles electrons from NAD(P)H:plastoquinone, via FMN and iron-sulfur (Fe-S) centers, to quinones in the photosynthetic chain and possibly in a chloroplast respiratory chain. The immediate electron acceptor for the enzyme in this species is believed to be plastoquinone. Couples the redox reaction to proton translocation, and thus conserves the redox energy in a proton gradient. The protein is NAD(P)H-quinone oxidoreductase subunit I, chloroplastic of Angiopteris evecta (Mule's foot fern).